Consider the following 523-residue polypeptide: Lysine--tRNA ligase (523 aa).

A 'HIGH' region motif is present at residues 30–38 (PSGYVHVGN). Residues Asp-95, Cys-99, His-100, His-106, Cys-177, His-180, Cys-199, and His-203 each coordinate Zn(2+). Positions 279 to 283 (KMSGS) match the 'KMSKS' region motif.

The protein belongs to the class-I aminoacyl-tRNA synthetase family. The cofactor is Zn(2+).

The protein resides in the cytoplasm. The catalysed reaction is tRNA(Lys) + L-lysine + ATP = L-lysyl-tRNA(Lys) + AMP + diphosphate. This chain is Lysine--tRNA ligase (lysS), found in Pyrococcus furiosus (strain ATCC 43587 / DSM 3638 / JCM 8422 / Vc1).